The chain runs to 565 residues: Putative pentatricopeptide repeat-containing protein At3g05240 (565 aa).

PPR repeat units follow at residues 37 to 70 (NVIPLSRLIDFCTTCPETMNLSYARSVFESIDCP), 71 to 105 (SVYIWNSMIRGYSNSPNPDKALIFYQEMLRKGYSP), 106 to 140 (DYFTFPYVLKACSGLRDIQFGSCVHGFVVKTGFEV), 141 to 171 (NMYVSTCLLHMYMCCGEVNYGLRVFEDIPQW), 172 to 206 (NVVAWGSLISGFVNNNRFSDAIEAFREMQSNGVKA), 207 to 241 (NETIMVDLLVACGRCKDIVTGKWFHGFLQGLGFDP), 250 to 280 (NVILATSLIDMYAKCGDLRTARYLFDGMPER), 281 to 315 (TLVSWNSIITGYSQNGDAEEALCMFLDMLDLGIAP), 316 to 350 (DKVTFLSVIRASMIQGCSQLGQSIHAYVSKTGFVK), 351 to 381 (DAAIVCALVNMYAKTGDAESAKKAFEDLEKK), 382 to 416 (DTIAWTVVIIGLASHGHGNEALSIFQRMQEKGNAT), 418 to 448 (DGITYLGVLYACSHIGLVEEGQRYFAEMRDL), and 454 to 484 (TVEHYGCMVDILSRAGRFEEAERLVKTMPVK). The type E motif stretch occupies residues 489–564 (IWGALLNGCD…VLGHSSVETM (76 aa)).

It belongs to the PPR family. PCMP-E subfamily.

The protein is Putative pentatricopeptide repeat-containing protein At3g05240 (PCMP-E82) of Arabidopsis thaliana (Mouse-ear cress).